The primary structure comprises 150 residues: Histone H2B.2 (150 aa).

2 stretches are compositionally biased toward basic and acidic residues: residues 1 to 21 (MAPK…KAGE) and 33 to 49 (EKRL…EGKK). Positions 1-58 (MAPKAEKKPAEKKPAEEKAGEKAPAAGKKPKAEKRLPASKGEKGGEGKKERGRKKAKK) are disordered. Residues lysine 7 and lysine 34 each carry the N6-acetyllysine modification. Residue lysine 146 forms a Glycyl lysine isopeptide (Lys-Gly) (interchain with G-Cter in ubiquitin) linkage.

Belongs to the histone H2B family. In terms of assembly, the nucleosome is a histone octamer containing two molecules each of H2A, H2B, H3 and H4 assembled in one H3-H4 heterotetramer and two H2A-H2B heterodimers. The octamer wraps approximately 147 bp of DNA. Post-translationally, can be acetylated to form H2BK6ac and H2BK33ac. In terms of processing, monoubiquitinated by BRE1 to form H2BK143ub1 and deubiquitinated by UBP26. Required for heterochromatic histone H3 di- and trimethylation at H3K4me. May give a specific tag for epigenetic transcriptional activation.

The protein localises to the nucleus. The protein resides in the chromosome. In terms of biological role, core component of nucleosome. Nucleosomes wrap and compact DNA into chromatin, limiting DNA accessibility to the cellular machineries which require DNA as a template. Histones thereby play a central role in transcription regulation, DNA repair, DNA replication and chromosomal stability. DNA accessibility is regulated via a complex set of post-translational modifications of histones, also called histone code, and nucleosome remodeling. This is Histone H2B.2 (H2B.2) from Oryza sativa subsp. indica (Rice).